Here is a 324-residue protein sequence, read N- to C-terminus: Mevalonate-3-kinase (324 aa).

Residue leucine 19 coordinates substrate. 109-112 (SGSS) lines the ATP pocket. Residues glutamate 145 and arginine 149 each coordinate substrate. ATP-binding residues include arginine 190 and serine 193.

Belongs to the GHMP kinase family. In terms of assembly, homodimer.

It carries out the reaction (R)-mevalonate + ATP = (R)-3-phosphomevalonate + ADP + H(+). Its pathway is isoprenoid biosynthesis; isopentenyl diphosphate biosynthesis via mevalonate pathway. Functionally, catalyzes the phosphorylation of mevalonate (MVA) to yield mevalonate-3-phosphate. Functions in an alternative mevalonate pathway, which passes through mevalonate 3-phosphate rather than mevalonate 5-phosphate. Also able to catalyze the formation of isobutene via the conversion of 3-hydroxyisovalerate (3-HIV) to an unstable 3-phosphate intermediate that undergoes a spontaneous decarboxylation. This chain is Mevalonate-3-kinase, found in Picrophilus torridus (strain ATCC 700027 / DSM 9790 / JCM 10055 / NBRC 100828 / KAW 2/3).